The sequence spans 298 residues: 4-diphosphocytidyl-2-C-methyl-D-erythritol kinase (298 aa).

Lysine 15 is an active-site residue. 102–112 contributes to the ATP binding site; that stretch reads PVAAGIGGGSS. Aspartate 142 is a catalytic residue.

Belongs to the GHMP kinase family. IspE subfamily.

It catalyses the reaction 4-CDP-2-C-methyl-D-erythritol + ATP = 4-CDP-2-C-methyl-D-erythritol 2-phosphate + ADP + H(+). The protein operates within isoprenoid biosynthesis; isopentenyl diphosphate biosynthesis via DXP pathway; isopentenyl diphosphate from 1-deoxy-D-xylulose 5-phosphate: step 3/6. Functionally, catalyzes the phosphorylation of the position 2 hydroxy group of 4-diphosphocytidyl-2C-methyl-D-erythritol. This Hyphomonas neptunium (strain ATCC 15444) protein is 4-diphosphocytidyl-2-C-methyl-D-erythritol kinase.